The sequence spans 153 residues: MSSHQQKQPCTAPPQLHEQQVKQPCQPPPPEPCVSQVKTPCDTKVPEPCHPKAPEPCHPKAPEPCHPKAPEPCHPKAPEPCHPKAPEPCHPKAPEPCHPKAPEPCHPKAPEPCHPKVPEPCLPKAPEPCQPIVPEPCPSTVTPILAQQKTKQK.

2 disordered regions span residues 1 to 35 and 49 to 85; these read MSSH…PCVS and CHPK…HPKA. 14 tandem repeats follow at residues 27 to 34, 35 to 42, 43 to 50, 51 to 58, 59 to 66, 67 to 74, 75 to 82, 83 to 90, 91 to 98, 99 to 106, 107 to 114, 115 to 122, 123 to 130, and 131 to 138. Residues 27 to 138 are 14 X 8 AA approximate tandem repeats; sequence PPPPEPCVSQ…CQPIVPEPCP (112 aa).

This sequence belongs to the cornifin (SPRR) family. Expressed in fetal periderm, hair follicles and in the thickened epidermis of the lip and footpad. Also present in the epithelia of various tissues such as the penis, vagina, forestomach, tongue and esophagus.

It is found in the cytoplasm. In terms of biological role, cross-linked envelope protein of keratinocytes. It is a keratinocyte protein that first appears in the cell cytosol, but ultimately becomes cross-linked to membrane proteins by transglutaminase. All that results in the formation of an insoluble envelope beneath the plasma membrane. This chain is Cornifin-B (Sprr1b), found in Mus musculus (Mouse).